Reading from the N-terminus, the 165-residue chain is Lithostathine-1 (165 aa).

Positions 1-21 (MARNAYFILLSCLIVLSPSQG) are cleaved as a signal peptide. Q22 is modified (pyrrolidone carboxylic acid). One can recognise a C-type lectin domain in the interval 33-163 (ISCPEGSNAY…DAQYSFVCKF (131 aa)). 3 cysteine pairs are disulfide-bonded: C35/C46, C63/C161, and C136/C153. N129 carries N-linked (GlcNAc...) asparagine glycosylation.

Expressed only in regenerating islets and normal exocrine pancreas, but not in normal pancreatic islets. Expressed strongly in pancreas, moderately in gall bladder, and weakly in liver.

The protein resides in the secreted. Its function is as follows. Might act as an inhibitor of spontaneous calcium carbonate precipitation. This is Lithostathine-1 (Reg1) from Mus musculus (Mouse).